We begin with the raw amino-acid sequence, 419 residues long: F-box/FBD/LRR-repeat protein At4g26340 (419 aa).

The F-box domain maps to 1-53 (MDRISQLSDDLLLQILSFIPGKDVVATSLLSKRWQSLWMLVSELEYDDSYHTG). LRR repeat units follow at residues 55 to 81 (YKSFSQFVYRSLLSNNAPVIKHLHLNL), 132 to 159 (TLRLINFVLLDVPSSVCLPSLKVLHLKT), 160 to 185 (VDYEDDASLPSLLFGCPNLEELFVER), 187 to 208 (DQDLEMDVTFVVPSLRRLSMID), 226 to 253 (YLNITDDAVYDVRQIENMPELVEAHVDI), 254 to 284 (TQGVTHKFLRALTSVRQLSLCLSLSEVMCPS), and 299 to 324 (VVKGWWDLLTSMLQDSPKLQSLKLID). The FBD domain maps to 339-389 (GWKLPSSVPECLLFSLEAFEWIGYKGRRGDREVATYVLKNAACLRTAKFSP).

This is F-box/FBD/LRR-repeat protein At4g26340 from Arabidopsis thaliana (Mouse-ear cress).